Here is an 83-residue protein sequence, read N- to C-terminus: Small ribosomal subunit protein eS21 (83 aa).

Belongs to the eukaryotic ribosomal protein eS21 family. Component of the 40S small ribosomal subunit.

The protein resides in the cytoplasm. It is found in the cytosol. It localises to the rough endoplasmic reticulum. Its function is as follows. Component of the small ribosomal subunit. The ribosome is a large ribonucleoprotein complex responsible for the synthesis of proteins in the cell. In Ictalurus punctatus (Channel catfish), this protein is Small ribosomal subunit protein eS21 (rps21).